Consider the following 239-residue polypeptide: Ribosomal RNA small subunit methyltransferase G (239 aa).

Residues G78, F83, 129–130 (AE), and R148 contribute to the S-adenosyl-L-methionine site.

The protein belongs to the methyltransferase superfamily. RNA methyltransferase RsmG family.

The protein localises to the cytoplasm. In terms of biological role, specifically methylates the N7 position of a guanine in 16S rRNA. This is Ribosomal RNA small subunit methyltransferase G from Clostridium botulinum (strain Okra / Type B1).